We begin with the raw amino-acid sequence, 307 residues long: Ribosomal RNA small subunit methyltransferase H (307 aa).

S-adenosyl-L-methionine is bound by residues 32-34 (GGH), Asp-52, Phe-78, Asp-99, and Gln-106.

Belongs to the methyltransferase superfamily. RsmH family.

It localises to the cytoplasm. It carries out the reaction cytidine(1402) in 16S rRNA + S-adenosyl-L-methionine = N(4)-methylcytidine(1402) in 16S rRNA + S-adenosyl-L-homocysteine + H(+). In terms of biological role, specifically methylates the N4 position of cytidine in position 1402 (C1402) of 16S rRNA. This is Ribosomal RNA small subunit methyltransferase H from Acinetobacter baumannii (strain SDF).